The chain runs to 393 residues: Alpha-1,2 mannosyltransferase KTR1 (393 aa).

At 1-16 (MAKIMIPASKQPVYKK) the chain is on the cytoplasmic side. The helical; Signal-anchor for type II membrane protein transmembrane segment at 17-34 (LGLLLVAVFTVYVFFHGA) threads the bilayer. Residues 35–68 (QYARGSAPSPKYSTVLSSGSGYKYSKVELPKYTG) form a stem region region. Over 35 to 393 (QYARGSAPSP…KPAGWQNHIG (359 aa)) the chain is Lumenal. Positions 69-393 (PREKATFVTL…KPAGWQNHIG (325 aa)) are catalytic. N-linked (GlcNAc...) asparagine glycosylation is present at Asn120. The active-site Nucleophile is Glu280.

It belongs to the glycosyltransferase 15 family. The cofactor is Mn(2+). In terms of processing, N-glycosylated.

It localises to the golgi apparatus membrane. Its pathway is protein modification; protein glycosylation. Mannosyltransferase that transfers a mannose residue from GDP-mannose to a range of acceptors in vitro, forming an alpha-(1-&gt;2)-D-mannosyl-D-mannose linkage. This chain is Alpha-1,2 mannosyltransferase KTR1 (KTR1), found in Saccharomyces cerevisiae (strain ATCC 204508 / S288c) (Baker's yeast).